Here is an 875-residue protein sequence, read N- to C-terminus: Serine/threonine-protein kinase ATG1 (875 aa).

Residues 22-318 form the Protein kinase domain; it reads YSIGPEIGKG…FNEFFNDPLI (297 aa). Residues 28-36 and Lys51 contribute to the ATP site; that span reads IGKGSFATV. Asp168 (proton acceptor) is an active-site residue. Positions 367–379 are enriched in basic and acidic residues; that stretch reads EKSKQDLPAREVS. Disordered regions lie at residues 367–422 and 470–515; these read EKSK…QPHN and INPR…DRRI. Over residues 380 to 389 the composition is skewed to polar residues; sequence THASESQTKA. The segment covering 390-405 has biased composition (basic and acidic residues); sequence VDTRPSSRDEEIKEII. Composition is skewed to polar residues over residues 406-420, 473-490, and 497-508; these read NKNSPGPETSRSIQP, RRTSSGSDNSYNGPNNMQ, and LRSNSSGSQRRP.

Belongs to the protein kinase superfamily. Ser/Thr protein kinase family. APG1/unc-51/ULK1 subfamily. In terms of assembly, homodimer. Forms a ternary complex with ATG13 and ATG17.

The protein resides in the cytoplasm. Its subcellular location is the preautophagosomal structure membrane. The catalysed reaction is L-seryl-[protein] + ATP = O-phospho-L-seryl-[protein] + ADP + H(+). It catalyses the reaction L-threonyl-[protein] + ATP = O-phospho-L-threonyl-[protein] + ADP + H(+). Serine/threonine protein kinase involved in the cytoplasm to vacuole transport (Cvt) and found to be essential in autophagy, where it is required for the formation of autophagosomes. Involved in the clearance of protein aggregates which cannot be efficiently cleared by the proteasome. Required for selective autophagic degradation of the nucleus (nucleophagy) as well as for mitophagy which contributes to regulate mitochondrial quantity and quality by eliminating the mitochondria to a basal level to fulfill cellular energy requirements and preventing excess ROS production. Also involved in endoplasmic reticulum-specific autophagic process, in selective removal of ER-associated degradation (ERAD) substrates. Plays a key role in ATG9 and ATG23 cycling through the pre-autophagosomal structure and is necessary to promote ATG18 binding to ATG9 through phosphorylation of ATG9. Catalyzes phosphorylation of ATG4, decreasing the interaction between ATG4 and ATG8 and impairing deconjugation of PE-conjugated forms of ATG8. The chain is Serine/threonine-protein kinase ATG1 from Debaryomyces hansenii (strain ATCC 36239 / CBS 767 / BCRC 21394 / JCM 1990 / NBRC 0083 / IGC 2968) (Yeast).